The sequence spans 396 residues: MAKGKFERTKPHVNVGTIGHVDHGKTTLTAAITTVLTQKFGGEAKAYDQIDAAPEEKARGITINTAHVEYETANRHYAHVDCPGHADYVKNMITGAAQMDGAILVCSAADGPMPQTREHILLARQVGVPYIIVFLNKCDMVDDAELLELVEMEVRELLSKYDFPGDETPIIKGSAKLALEGDKGELGEVAIMNLADALDTYIPTPERAVDGAFLMPVEDVFSISGRGTVVTGRVERGVVKVGEEIEIVGIKPTVKTTCTGVEMFRKLLDQGQAGDNVGILLRGTKREDVERGQVLAKPGSINPHTHFTAEVYVLSKDEGGRHTPFFNNYRPQFYFRTTDVTGSIELPKDKEMVMPGDNVSITVKLINPIAMEEGLRFAIREGGRTVGAGVVAKILE.

Residues 10–206 form the tr-type G domain; that stretch reads KPHVNVGTIG…ALDTYIPTPE (197 aa). The tract at residues 19-26 is G1; sequence GHVDHGKT. Residue 19–26 participates in GTP binding; sequence GHVDHGKT. A Mg(2+)-binding site is contributed by Thr26. Positions 60–64 are G2; that stretch reads GITIN. The G3 stretch occupies residues 81 to 84; sequence DCPG. GTP contacts are provided by residues 81–85 and 136–139; these read DCPGH and NKCD. Residues 136-139 form a G4 region; that stretch reads NKCD. The segment at 174–176 is G5; the sequence is SAK.

It belongs to the TRAFAC class translation factor GTPase superfamily. Classic translation factor GTPase family. EF-Tu/EF-1A subfamily. Monomer.

The protein localises to the cytoplasm. The enzyme catalyses GTP + H2O = GDP + phosphate + H(+). Functionally, GTP hydrolase that promotes the GTP-dependent binding of aminoacyl-tRNA to the A-site of ribosomes during protein biosynthesis. The protein is Elongation factor Tu of Paraburkholderia xenovorans (strain LB400).